The primary structure comprises 425 residues: Putative integrase/recombinase y4rF (425 aa).

The Core-binding (CB) domain occupies 123–210 (DPDALLLASF…HIRTFLRFLC (88 aa)). Residues 233–418 (HLPPRLAWGD…AASQLAEVAL (186 aa)) form the Tyr recombinase domain. Active-site residues include R273, K298, H370, R373, and H396. Residue Y405 is the O-(3'-phospho-DNA)-tyrosine intermediate of the active site.

Belongs to the 'phage' integrase family.

This chain is Putative integrase/recombinase y4rF, found in Sinorhizobium fredii (strain NBRC 101917 / NGR234).